Reading from the N-terminus, the 171-residue chain is Neuronal vesicle trafficking-associated protein 2 (171 aa).

Positions 1-21 are disordered; it reads MVKLNSNPGEKGAKPPSVEDG. Topologically, residues 1 to 71 are cytoplasmic; that stretch reads MVKLNSNPGE…FRVPKIAEFT (71 aa). The helical; Signal-anchor for type II membrane protein transmembrane segment at 72-92 threads the bilayer; sequence VTILVSLALAFLACIVFLVVY. At 93-171 the chain is on the lumenal side; that stretch reads KAFTYDHSCP…EPKPPKTQGH (79 aa).

The protein belongs to the NSG family. Specifically expressed in neural and neuroendocrine tissues. Pituitary and less in adrenal gland and testis. Expressed in the hippocampus throughout development. Remains enriched in layer V cortical neurons during development. At P0, broadly expressed in the neocortex. Is down-regulated overall at P8 and P14, but remains relatively enriched in layer V. At P0 is lower expressed in the cerebellum. Expression remains low throughout development, and is undetectable by adulthood.

It is found in the membrane. It localises to the golgi apparatus. The protein localises to the trans-Golgi network membrane. Its subcellular location is the cell projection. The protein resides in the dendrite. It is found in the endosome membrane. It localises to the early endosome membrane. The protein localises to the late endosome membrane. Its subcellular location is the lysosome lumen. The protein resides in the cytoplasmic vesicle membrane. It is found in the golgi stack membrane. It localises to the endosome. The protein localises to the multivesicular body membrane. The polypeptide is Neuronal vesicle trafficking-associated protein 2 (Mus musculus (Mouse)).